The following is a 164-amino-acid chain: PTS system sorbose-specific EIIB component (164 aa).

A PTS EIIB type-4 domain is found at 1–164 (MIITLARVDD…AKIDEVFGKE (164 aa)). His-14 (pros-phosphohistidine intermediate) is an active-site residue. Phosphohistidine; by EIIA is present on His-14.

Its subcellular location is the cytoplasm. The catalysed reaction is keto-L-sorbose(out) + N(pros)-phospho-L-histidyl-[protein] = L-sorbose 1-phosphate(in) + L-histidyl-[protein]. In terms of biological role, the phosphoenolpyruvate-dependent sugar phosphotransferase system (PTS), a major carbohydrate active transport system, catalyzes the phosphorylation of incoming sugar substrates concomitant with their translocation across the cell membrane. The enzyme II SorABCD PTS system is involved in L-sorbose transport. The chain is PTS system sorbose-specific EIIB component from Lacticaseibacillus casei (Lactobacillus casei).